The chain runs to 369 residues: Ubiquinone biosynthesis protein COQ4, mitochondrial (369 aa).

The transit peptide at 1–28 (MTSILGSARPLIQVGPKSRNASTSMSRL) directs the protein to the mitochondrion. The interval 1 to 70 (MTSILGSARP…NPTNASRHPR (70 aa)) is disordered. 2 stretches are compositionally biased toward polar residues: residues 19–33 (RNAS…SFPT) and 47–66 (YATI…TNAS). Zn(2+) is bound by residues histidine 198, aspartate 199, histidine 202, and glutamate 214. The disordered stretch occupies residues 330–369 (FSGRAKKGGKRRGWPSKILEHQKAQHQQQQQQQKVDESRN). The span at 332-343 (GRAKKGGKRRGW) shows a compositional bias: basic residues.

Belongs to the COQ4 family. Component of a multi-subunit COQ enzyme complex, composed of at least COQ3, COQ4, COQ5, COQ6, COQ7 and COQ9. Zn(2+) serves as cofactor.

Its subcellular location is the mitochondrion inner membrane. The catalysed reaction is a 4-hydroxy-3-methoxy-5-(all-trans-polyprenyl)benzoate + H(+) = a 2-methoxy-6-(all-trans-polyprenyl)phenol + CO2. It functions in the pathway cofactor biosynthesis; ubiquinone biosynthesis. In terms of biological role, lyase that catalyzes the C1-decarboxylation of 4-hydroxy-3-methoxy-5-(all-trans-polyprenyl)benzoic acid into 2-methoxy-6-(all-trans-polyprenyl)phenol during ubiquinone biosynthesis. The sequence is that of Ubiquinone biosynthesis protein COQ4, mitochondrial from Mycosarcoma maydis (Corn smut fungus).